Consider the following 296-residue polypeptide: Protoheme IX farnesyltransferase (296 aa).

Topologically, residues 1–9 are cytoplasmic; sequence MIFKQYLQV. A helical membrane pass occupies residues 10 to 28; it reads TKPGIIFGNLISVIGGFLL. Over 29-37 the chain is Periplasmic; the sequence is ASKGSIDYP. The chain crosses the membrane as a helical span at residues 38-56; it reads LFIYTLVGVSLVVASGCVF. Over 57-78 the chain is Cytoplasmic; that stretch reads NNYIDRDIDRKMERTKNRVLVK. Residues 79-97 traverse the membrane as a helical segment; that stretch reads GLISPAVSLVYATLLGIAG. Topologically, residues 98–107 are periplasmic; sequence FMLLWFGANP. Residues 108–126 traverse the membrane as a helical segment; that stretch reads LACWLGVMGFVVYVGVYSL. Topologically, residues 127-197 are cytoplasmic; it reads YMKRHSVYGT…YQAANIPVLP (71 aa). Residues 198–216 form a helical membrane-spanning segment; it reads VVKGISVAKNHITLYIIAF. Residues 217–228 lie on the Periplasmic side of the membrane; sequence AVATLMLSLGGY. A helical membrane pass occupies residues 229 to 247; that stretch reads AGYKYLVVAAAVSVWWLGM. Residues 248-268 are Cytoplasmic-facing; sequence ALRGYKVADDRIWARKLFGFS. A helical membrane pass occupies residues 269 to 287; sequence IIAITALSVMMSVDFMVPD. Residues 288–296 lie on the Periplasmic side of the membrane; sequence SHTLLAAVW.

This sequence belongs to the UbiA prenyltransferase family. Protoheme IX farnesyltransferase subfamily.

Its subcellular location is the cell inner membrane. The catalysed reaction is heme b + (2E,6E)-farnesyl diphosphate + H2O = Fe(II)-heme o + diphosphate. Its pathway is porphyrin-containing compound metabolism; heme O biosynthesis; heme O from protoheme: step 1/1. Its function is as follows. Converts heme B (protoheme IX) to heme O by substitution of the vinyl group on carbon 2 of heme B porphyrin ring with a hydroxyethyl farnesyl side group. In Escherichia coli O1:K1 / APEC, this protein is Protoheme IX farnesyltransferase.